Here is a 237-residue protein sequence, read N- to C-terminus: Urease accessory protein UreF (237 aa).

Belongs to the UreF family. In terms of assembly, ureD, UreF and UreG form a complex that acts as a GTP-hydrolysis-dependent molecular chaperone, activating the urease apoprotein by helping to assemble the nickel containing metallocenter of UreC. The UreE protein probably delivers the nickel.

The protein resides in the cytoplasm. Its function is as follows. Required for maturation of urease via the functional incorporation of the urease nickel metallocenter. This is Urease accessory protein UreF from Streptococcus thermophilus (strain ATCC BAA-250 / LMG 18311).